A 91-amino-acid chain; its full sequence is uncharacterized protein (91 aa).

Positions 1 to 21 (MKIISKMLVGALALAVTNVYA) are cleaved as a signal peptide.

This sequence belongs to the BhsA/McbA family.

The protein localises to the periplasm. This is an uncharacterized protein from Escherichia coli (strain K12).